The sequence spans 60 residues: Potassium channel toxin alpha-KTx 15.9 (60 aa).

The N-terminal stretch at 1 to 22 (MKIFLPVLVMLILCSMCLLTEG) is a signal peptide. Cystine bridges form between cysteine 30-cysteine 51, cysteine 36-cysteine 56, and cysteine 40-cysteine 58.

The protein belongs to the short scorpion toxin superfamily. Potassium channel inhibitor family. Alpha-KTx 15 subfamily. In terms of tissue distribution, expressed by the venom gland.

It localises to the secreted. In terms of biological role, blocker of A-type voltage-gated potassium channels of cerebellar granular cells. May also inhibit Kv4/KCND when coexpressed with DPP6 or DPP10. The occlusion of the outer entry of the K(+) conducting pore is partially reversible and affects both open and closed channels. It shares the same target in rat brain than BmTX3 (AC Q8I0L5) and AmmTX3 (AC P60208). Has been shown to weakly inhibit TRPV1 channels. This is Potassium channel toxin alpha-KTx 15.9 from Lychas mucronatus (Chinese swimming scorpion).